A 258-amino-acid chain; its full sequence is Ribonuclease HII (258 aa).

The 188-residue stretch at 71–258 folds into the RNase H type-2 domain; that stretch reads QLIAGIDEVG…PIKTMVNFKS (188 aa). 3 residues coordinate a divalent metal cation: aspartate 77, glutamate 78, and aspartate 169.

This sequence belongs to the RNase HII family. Mn(2+) serves as cofactor. The cofactor is Mg(2+).

It localises to the cytoplasm. It catalyses the reaction Endonucleolytic cleavage to 5'-phosphomonoester.. In terms of biological role, endonuclease that specifically degrades the RNA of RNA-DNA hybrids. This chain is Ribonuclease HII (rnhB), found in Lactococcus lactis subsp. lactis (strain IL1403) (Streptococcus lactis).